The primary structure comprises 321 residues: Dolichyl N-acetyl-alpha-D-glucosaminyl phosphate 3-beta-D-2,3-diacetamido-2,3-dideoxy-beta-D-glucuronosyltransferase (321 aa).

The next 2 helical transmembrane spans lie at Phe252–Ile272 and Leu290–Phe310.

The protein belongs to the glycosyltransferase 2 family.

It is found in the cell membrane. It catalyses the reaction an archaeal dolichyl N-acetyl-alpha-D-glucosaminyl phosphate + UDP-2,3-diacetamido-2,3-dideoxy-alpha-D-glucuronate = an archaeal dolichyl 3-O-(2,3-diacetamido-2,3-dideoxy- beta-D-glucuronosyl)-N-acetyl- alpha-D-glucosaminyl phosphate + UDP + H(+). The protein operates within cell surface structure biogenesis; S-layer biogenesis. It participates in protein modification; protein glycosylation. In terms of biological role, involved in the assembly of an N-linked disaccharide that decorates the S-layer glycoprotein and flagellins. AglC catalyzes the transfer of 2,3-diacetamido-2,3-dideoxy-alpha-D-glucuronic acid (Glc-2,3-diNAcA) from uridine 5'-diphospho 2,3-diacetamido-2,3-dideoxy-alpha-D-glucuronic acid (UDP-Glc-2,3-diNAcA) to the AglK product Dol-P-GlcNAc to yield Dol-P-GlcNAc-Glc-2,3-diNAcA. AglC is specific for the monophosphate-linked Dol-P-GlcNAc. This chain is Dolichyl N-acetyl-alpha-D-glucosaminyl phosphate 3-beta-D-2,3-diacetamido-2,3-dideoxy-beta-D-glucuronosyltransferase, found in Methanococcus voltae.